Consider the following 452-residue polypeptide: DNA primase DnaG (452 aa).

In terms of domain architecture, Toprim spans 172–248 (DTVIIVEGRA…DIDYIARAPP (77 aa)). The Mg(2+) site is built by E178, D222, and D224. The interval 289-320 (KKQIEQAQVQPSAAPTSPQPQPESTQPTQPIQ) is disordered. The segment covering 294–320 (QAQVQPSAAPTSPQPQPESTQPTQPIQ) has biased composition (low complexity).

This sequence belongs to the archaeal DnaG primase family. As to quaternary structure, forms a ternary complex with MCM helicase and DNA. Component of the archaeal exosome complex. Mg(2+) is required as a cofactor.

It catalyses the reaction ssDNA + n NTP = ssDNA/pppN(pN)n-1 hybrid + (n-1) diphosphate.. In terms of biological role, RNA polymerase that catalyzes the synthesis of short RNA molecules used as primers for DNA polymerase during DNA replication. Also part of the exosome, which is a complex involved in RNA degradation. Acts as a poly(A)-binding protein that enhances the interaction between heteromeric, adenine-rich transcripts and the exosome. The sequence is that of DNA primase DnaG from Caldivirga maquilingensis (strain ATCC 700844 / DSM 13496 / JCM 10307 / IC-167).